Consider the following 264-residue polypeptide: Glutamate racemase (264 aa).

Substrate contacts are provided by residues 10–11 (DS) and 42–43 (YG). Cysteine 73 serves as the catalytic Proton donor/acceptor. 74 to 75 (NT) is a substrate binding site. The active-site Proton donor/acceptor is cysteine 183. 184–185 (TH) contacts substrate.

It belongs to the aspartate/glutamate racemases family.

The enzyme catalyses L-glutamate = D-glutamate. Its pathway is cell wall biogenesis; peptidoglycan biosynthesis. Its function is as follows. Provides the (R)-glutamate required for cell wall biosynthesis. This Streptococcus agalactiae serotype III (strain NEM316) protein is Glutamate racemase.